Reading from the N-terminus, the 399-residue chain is Argininosuccinate synthase (399 aa).

An ATP-binding site is contributed by 9 to 17 (AYSGGLDTS). Tyr85 is a binding site for L-citrulline. An ATP-binding site is contributed by Gly115. 3 residues coordinate L-aspartate: Thr117, Asn121, and Asp122. Asn121 is a binding site for L-citrulline. 4 residues coordinate L-citrulline: Arg125, Ser173, Glu258, and Tyr270.

It belongs to the argininosuccinate synthase family. Type 1 subfamily. As to quaternary structure, homotetramer.

Its subcellular location is the cytoplasm. The catalysed reaction is L-citrulline + L-aspartate + ATP = 2-(N(omega)-L-arginino)succinate + AMP + diphosphate + H(+). It participates in amino-acid biosynthesis; L-arginine biosynthesis; L-arginine from L-ornithine and carbamoyl phosphate: step 2/3. This chain is Argininosuccinate synthase, found in Streptococcus thermophilus (strain CNRZ 1066).